The primary structure comprises 244 residues: MKVTVIGCYGGFPAANEATSGYLFQSGDYSLLVDCGSAVLSKLFGYVPAEKLDAVVLSHYHHDHIADIGPLQFAKQVGSFLGKGEHTLPIYGHDADIEQFQKLTYKTHTKGIAYQPDQPLTAGPFTITFLKTIHPVTCYAMRITDGSHTVVYTADSSYQDSFIPFSKDADLLISECNFYADQDGTSAGHMNSLEAGRIAKEAGAGELLLTHLPHFGVHDNLRKEAKTVFNGEVNIAKSGFVWEG.

Positions 59, 61, 63, 64, 134, 155, and 211 each coordinate Zn(2+).

It belongs to the metallo-beta-lactamase superfamily. Requires Zn(2+) as cofactor.

The protein is Probable metallo-hydrolase YhfI (yhfI) of Bacillus subtilis (strain 168).